A 604-amino-acid polypeptide reads, in one-letter code: FAD-linked oxidoreductase easE (604 aa).

The signal sequence occupies residues 1-25 (MQFLLWSTGLVALLSWLIYTQETQS). Asparagine 47, asparagine 70, asparagine 106, and asparagine 196 each carry an N-linked (GlcNAc...) asparagine glycan. The 184-residue stretch at 125–308 (QGRIPLFTVG…TRATMRVFPD (184 aa)) folds into the FAD-binding PCMH-type domain.

This sequence belongs to the oxygen-dependent FAD-linked oxidoreductase family. FAD serves as cofactor.

The protein operates within alkaloid biosynthesis; ergot alkaloid biosynthesis. FAD-linked oxidoreductase; part of the gene cluster that mediates the biosynthesis of fungal ergot alkaloid. DmaW catalyzes the first step of ergot alkaloid biosynthesis by condensing dimethylallyl diphosphate (DMAP) and tryptophan to form 4-dimethylallyl-L-tryptophan. The second step is catalyzed by the methyltransferase easF that methylates 4-dimethylallyl-L-tryptophan in the presence of S-adenosyl-L-methionine, resulting in the formation of 4-dimethylallyl-L-abrine. The catalase easC and the FAD-dependent oxidoreductase easE then transform 4-dimethylallyl-L-abrine to chanoclavine-I which is further oxidized by easD in the presence of NAD(+), resulting in the formation of chanoclavine-I aldehyde. Chanoclavine-I aldehyde is the precursor of ergoamides and ergopeptines in Clavicipitaceae, and clavine-type alcaloids such as fumiclavine in Trichocomaceae. However, the metabolites downstream of chanoclavine-I aldehyde in Arthrodermataceae have not been identified yet. The polypeptide is FAD-linked oxidoreductase easE (Trichophyton verrucosum (strain HKI 0517)).